We begin with the raw amino-acid sequence, 250 residues long: Oil body-associated protein 2B (250 aa).

Positions 1–29 (MSSSDQNPAATPASSGPAEPSPPGRPTAV) are disordered. Residues 8–18 (PAATPASSGPA) are compositionally biased toward low complexity.

Belongs to the OBAP family.

The chain is Oil body-associated protein 2B from Zea mays (Maize).